The primary structure comprises 103 residues: Large ribosomal subunit protein bL21 (103 aa).

It belongs to the bacterial ribosomal protein bL21 family. Part of the 50S ribosomal subunit. Contacts protein L20.

In terms of biological role, this protein binds to 23S rRNA in the presence of protein L20. The chain is Large ribosomal subunit protein bL21 from Kineococcus radiotolerans (strain ATCC BAA-149 / DSM 14245 / SRS30216).